A 258-amino-acid polypeptide reads, in one-letter code: Lysine-rich coiled-coil protein 1 (258 aa).

Residues 142 to 258 form a disordered region; sequence DNSTSTHQAS…MLWDQSILGF (117 aa). The span at 150 to 161 shows a compositional bias: basic residues; it reads ASHKQIHQKRKR. Composition is skewed to basic and acidic residues over residues 162–175, 183–213, and 220–232; these read HPEE…EEWS, CKEI…TEKL, and KGRD…EERK. Positions 211–248 form a coiled coil; the sequence is EKLKNRKEKKGRDVVSKKEERKRTKKKKEQGQERTEEE.

This chain is Lysine-rich coiled-coil protein 1 (KRCC1), found in Pongo abelii (Sumatran orangutan).